We begin with the raw amino-acid sequence, 112 residues long: Large ribosomal subunit protein uL22 (112 aa).

This sequence belongs to the universal ribosomal protein uL22 family. As to quaternary structure, part of the 50S ribosomal subunit.

Its function is as follows. This protein binds specifically to 23S rRNA; its binding is stimulated by other ribosomal proteins, e.g. L4, L17, and L20. It is important during the early stages of 50S assembly. It makes multiple contacts with different domains of the 23S rRNA in the assembled 50S subunit and ribosome. In terms of biological role, the globular domain of the protein is located near the polypeptide exit tunnel on the outside of the subunit, while an extended beta-hairpin is found that lines the wall of the exit tunnel in the center of the 70S ribosome. This is Large ribosomal subunit protein uL22 from Nitratidesulfovibrio vulgaris (strain ATCC 29579 / DSM 644 / CCUG 34227 / NCIMB 8303 / VKM B-1760 / Hildenborough) (Desulfovibrio vulgaris).